Reading from the N-terminus, the 147-residue chain is Ribonuclease H (147 aa).

In terms of domain architecture, RNase H type-1 spans 1-142 (MAGKVVMYTD…ADELANRGVR (142 aa)). Residues aspartate 10, glutamate 48, aspartate 70, and aspartate 134 each contribute to the Mg(2+) site.

Belongs to the RNase H family. Monomer. Requires Mg(2+) as cofactor.

Its subcellular location is the cytoplasm. It carries out the reaction Endonucleolytic cleavage to 5'-phosphomonoester.. Endonuclease that specifically degrades the RNA of RNA-DNA hybrids. This is Ribonuclease H from Marinobacter nauticus (strain ATCC 700491 / DSM 11845 / VT8) (Marinobacter aquaeolei).